The following is a 1117-amino-acid chain: Cytospin-A (1117 aa).

Disordered stretches follow at residues 1–176 (MKKA…NQIS), 293–323 (SLSP…GSVE), and 358–390 (SSDD…NASE). Low complexity-rich tracts occupy residues 45–72 (TTAS…TNGV) and 99–119 (KIST…NKES). Composition is skewed to basic and acidic residues over residues 120-131 (SSTRERLRERTR) and 158-171 (TTTE…KSKS). The stretch at 168–280 (KSKSDNQISD…LNALGFSLEQ (113 aa)) forms a coiled coil. A compositionally biased stretch (polar residues) spans 293 to 303 (SLSPEITPGNQ). Over residues 358–377 (SSDDALDAPSSSESEGIPSI) the composition is skewed to low complexity. A phosphoserine mark is found at S384, S385, and S389. Coiled coils occupy residues 394–449 (ACLT…MESL) and 487–807 (RYME…RGRV). Positions 852 to 878 (SQVPNPTAAAIPRTPLSPSPMKTPPAA) are disordered. S868, S881, and S887 each carry phosphoserine. Residues 920-997 (TSSTSRPASL…PTTRSRIREE (78 aa)) form a disordered region. Over residues 946–956 (RSSEEMKRDIS) the composition is skewed to basic and acidic residues. Low complexity predominate over residues 971-990 (TTSPQLSLSSSPTASVTPTT). Residues 1011 to 1116 (GSKRNALLKW…YVTAIYKYFE (106 aa)) enclose the Calponin-homology (CH) domain.

The protein belongs to the cytospin-A family. May interact with both microtubules and actin cytoskeleton.

It is found in the cytoplasm. Its subcellular location is the cytoskeleton. The protein resides in the spindle. The protein localises to the cell junction. It localises to the gap junction. In terms of biological role, involved in cytokinesis and spindle organization. May play a role in actin cytoskeleton organization and microtubule stabilization and hence required for proper cell adhesion and migration. The chain is Cytospin-A (SPECC1L) from Canis lupus familiaris (Dog).